The sequence spans 317 residues: MAGTWIFVEQRDGNIRKVTFEMLSEAKKFGDEVAAVVFGKGVEALAPEFAKYGADKVYVVEDDVFANYNTGAYVAQMVAMINEFKPNAVLFAHTFNGRDFASRLAQKLQLGLATDAIKVEVSAGKGVFTRAIYAGKALAKVEVAGEPVLGTIRPGVCEVGNTAGAGAVVKPAVAATAADVYQTVKSFVPTVSARPELTEADVVVSGGRGCKGPDGIKLVEQLADLLGAAVGGSRASIDSGWLGHELQVGQTGKVVNPNLYVAAGISGAIQHLAGMSSSKFIAAINTDTEAPIFNVSDFGVVADLFKVIPTLVSELKK.

This sequence belongs to the ETF alpha-subunit/FixB family. In terms of assembly, heterodimer of an alpha and a beta subunit. It depends on FAD as a cofactor.

The protein resides in the cytoplasm. The protein operates within lipid metabolism; butanoate metabolism. Functionally, part of an electron transfer flavoprotein involved in syntrophic growth of S.wolfei with butyrate. Probably receives electrons from butyryl-CoA dehydrogenases, and transfers them to the membrane-bound quinone oxidoreductase Swol_0698. This Syntrophomonas wolfei subsp. wolfei (strain DSM 2245B / Goettingen) protein is Electron transfer flavoprotein subunit alpha.